We begin with the raw amino-acid sequence, 125 residues long: MAITKEDILNAVAEMSVMDVCDLVKMMEDKFGVSAAAAVAVAAGPVAGPAEAAEEKTEFDVVLVDAGSNKIAAIKAVRGATGLGLKEAKDAVEGTPFTVKEAASKEEAEVLKKQLEEAGAKVELK.

Belongs to the bacterial ribosomal protein bL12 family. As to quaternary structure, homodimer. Part of the ribosomal stalk of the 50S ribosomal subunit. Forms a multimeric L10(L12)X complex, where L10 forms an elongated spine to which 2 to 4 L12 dimers bind in a sequential fashion. Binds GTP-bound translation factors.

Functionally, forms part of the ribosomal stalk which helps the ribosome interact with GTP-bound translation factors. Is thus essential for accurate translation. In Francisella tularensis subsp. tularensis (strain SCHU S4 / Schu 4), this protein is Large ribosomal subunit protein bL12.